The following is a 149-amino-acid chain: MRAVVQRVSRGVVTVGEETVGEIGHGFVVLLGVGREDTPDDAAYLAEKIANLRVFADENGKLNRSVLENGGSVLVVSQFTLFGDCRKGRRPGFSAAAPPERAVELYAEFVRRLAALGVPTAQGRFQEHMEVLIVNDGPVTLILDSRKLF.

Residues 137–138 carry the Gly-cisPro motif, important for rejection of L-amino acids motif; the sequence is GP.

It belongs to the DTD family. As to quaternary structure, homodimer.

The protein resides in the cytoplasm. It carries out the reaction glycyl-tRNA(Ala) + H2O = tRNA(Ala) + glycine + H(+). The enzyme catalyses a D-aminoacyl-tRNA + H2O = a tRNA + a D-alpha-amino acid + H(+). Its function is as follows. An aminoacyl-tRNA editing enzyme that deacylates mischarged D-aminoacyl-tRNAs. Also deacylates mischarged glycyl-tRNA(Ala), protecting cells against glycine mischarging by AlaRS. Acts via tRNA-based rather than protein-based catalysis; rejects L-amino acids rather than detecting D-amino acids in the active site. By recycling D-aminoacyl-tRNA to D-amino acids and free tRNA molecules, this enzyme counteracts the toxicity associated with the formation of D-aminoacyl-tRNA entities in vivo and helps enforce protein L-homochirality. This chain is D-aminoacyl-tRNA deacylase, found in Desulforudis audaxviator (strain MP104C).